A 106-amino-acid polypeptide reads, in one-letter code: UPF0145 protein (106 aa).

The protein belongs to the UPF0145 family.

This is UPF0145 protein from Listeria grayi (Listeria murrayi).